Here is a 762-residue protein sequence, read N- to C-terminus: Protein PHTF1 (762 aa).

One can recognise a PHTF domain in the interval 6–150; the sequence is RDAISWYQKK…VHCQIVSTQI (145 aa). The next 3 helical transmembrane spans lie at 77 to 97, 99 to 119, and 121 to 141; these read GLVR…VTSL, IFVW…LYLM, and PIVS…MGTV. Positions 152–184 are disordered; that stretch reads RPSGNNGNRRRRKLRKTVNGDGTRDNGNNSPDK. Asn-179 and Asn-224 each carry an N-linked (GlcNAc...) asparagine glycan. Phosphoserine occurs at positions 272, 276, 277, 334, and 336. The interval 345-415 is disordered; that stretch reads AAFSQGSRSG…NTLHSGTKRD (71 aa). Over residues 348–364 the composition is skewed to low complexity; that stretch reads SQGSRSGMSGGSRSLNL. Asn-363 is a glycosylation site (N-linked (GlcNAc...) asparagine). Basic and acidic residues predominate over residues 365–376; sequence SRRDSESTRHDS. A glycan (N-linked (GlcNAc...) asparagine) is linked at Asn-431. The next 4 membrane-spanning stretches (helical) occupy residues 473–493, 515–535, 611–631, and 645–665; these read GVGY…FPFL, TLFC…INFF, VVVS…CAQV, and WEFL…ASLG. Residues Asn-674 and Asn-733 are each glycosylated (N-linked (GlcNAc...) asparagine). The helical transmembrane segment at 737 to 757 threads the bilayer; that stretch reads VVILSAVSGVISDLLGFNIRL.

As to quaternary structure, interacts with FEM1B. Highly expressed in testis.

It localises to the endoplasmic reticulum membrane. Its subcellular location is the golgi apparatus. It is found in the cis-Golgi network membrane. This chain is Protein PHTF1, found in Rattus norvegicus (Rat).